A 314-amino-acid polypeptide reads, in one-letter code: Homeobox protein SIX3 (314 aa).

Positions Gly-188 to Ala-247 form a DNA-binding region, homeobox. 2 disordered regions span residues Asn-214 to Gly-233 and Arg-240 to Val-314. The segment covering Pro-271–Thr-293 has biased composition (low complexity). A compositionally biased stretch (polar residues) spans Thr-298–Val-314.

The protein belongs to the SIX/Sine oculis homeobox family.

It is found in the nucleus. Transcriptional regulator which can act as both a transcriptional repressor and activator by binding a ATTA homeodomain core recognition sequence on these target genes. During forebrain development represses WNT1 expression allowing zona limitans intrathalamica formation and thereby ensuring proper anterio-posterior patterning of the diencephalon and formation of the rostral diencephalon. Acts as a direct upstream activator of SHH expression in the rostral diencephalon ventral midline and that in turn SHH maintains its expression. In addition, Six3 activity is required for the formation of the telencephalon. During postnatal stages of brain development is necessary for ependymal cell maturation by promoting the maturation of radial glia into ependymal cells through regulation of neuroblast proliferation and migration. Acts on the proliferation and differentiation of neural progenitor cells through activating transcription of CCND1 and CCND2. During early lens formation plays a role in lens induction and specification by activating directly PAX6 in the presumptive lens ectoderm. In turn PAX6 activates SIX3 resulting in activation of PDGFRA and CCND1 promoting cell proliferation. Also is required for the neuroretina development by directly suppressing WNT8B expression in the anterior neural plate territory. Its action during retina development and lens morphogenesis is AES and TLE4-dependent manner. Furthermore, during eye development regulates several genes expression. Before and during early lens development represses the CRYGF promoter by binding a SIX repressor element. Directly activates RHO transcription, or cooperates with CRX or NRL. Six3 also functions in the formation of the proximodistal axis of the optic cup, and promotes the formation of optic vesicles-like structures. During pituitary development, acts in parallel or alternatively with HESX1 to control cell proliferation through Wnt/beta-catenin pathway. Plays a role in eye development by suppressing WNT1 expression and in dorsal-ventral patterning by repressing BMP signaling pathway. The polypeptide is Homeobox protein SIX3 (SIX3) (Gallus gallus (Chicken)).